Reading from the N-terminus, the 298-residue chain is uncharacterized protein (298 aa).

Residues Thr43 and Tyr105 each act as charge relay system in the active site. Tyr131 serves as the catalytic Proton donor. The active-site Schiff-base intermediate with substrate is Lys159.

Belongs to the DapA family. As to quaternary structure, homotetramer.

Its subcellular location is the cytoplasm. This is an uncharacterized protein from Pyrococcus furiosus (strain ATCC 43587 / DSM 3638 / JCM 8422 / Vc1).